A 120-amino-acid polypeptide reads, in one-letter code: Large ribosomal subunit protein uL22 (120 aa).

This sequence belongs to the universal ribosomal protein uL22 family. Part of the 50S ribosomal subunit.

In terms of biological role, this protein binds specifically to 23S rRNA; its binding is stimulated by other ribosomal proteins, e.g. L4, L17, and L20. It is important during the early stages of 50S assembly. It makes multiple contacts with different domains of the 23S rRNA in the assembled 50S subunit and ribosome. Functionally, the globular domain of the protein is located near the polypeptide exit tunnel on the outside of the subunit, while an extended beta-hairpin is found that lines the wall of the exit tunnel in the center of the 70S ribosome. This Crocosphaera subtropica (strain ATCC 51142 / BH68) (Cyanothece sp. (strain ATCC 51142)) protein is Large ribosomal subunit protein uL22.